The sequence spans 239 residues: Orotidine 5'-phosphate decarboxylase (239 aa).

Substrate contacts are provided by residues Asp11, Lys33, 60 to 69 (DLKLHDIPTT), Thr123, Arg185, Gln194, Gly214, and Arg215. Residue Lys62 is the Proton donor of the active site.

It belongs to the OMP decarboxylase family. Type 1 subfamily. Homodimer.

The catalysed reaction is orotidine 5'-phosphate + H(+) = UMP + CO2. It functions in the pathway pyrimidine metabolism; UMP biosynthesis via de novo pathway; UMP from orotate: step 2/2. Its function is as follows. Catalyzes the decarboxylation of orotidine 5'-monophosphate (OMP) to uridine 5'-monophosphate (UMP). In Bacillus subtilis (strain 168), this protein is Orotidine 5'-phosphate decarboxylase (pyrF).